The primary structure comprises 181 residues: Regulator of G-protein signaling 10 (181 aa).

Residues methionine 1–threonine 35 are disordered. Phosphoserine is present on residues serine 24 and serine 41. The region spanning serine 41 to lysine 156 is the RGS domain. Cysteine 74 is lipidated: S-palmitoyl cysteine. Positions proline 155–threonine 181 are disordered. Phosphoserine is present on serine 176.

As to quaternary structure, interacts with GNAZ, GNAI1 and GNAI3. Associates specifically with the activated, GTP-bound forms of GNAZ and GNAI3.

Its subcellular location is the cytoplasm. The protein resides in the cytosol. It localises to the nucleus. Its function is as follows. Regulates G protein-coupled receptor signaling cascades, including signaling downstream of the muscarinic acetylcholine receptor CHRM2. Inhibits signal transduction by increasing the GTPase activity of G protein alpha subunits, thereby driving them into their inactive GDP-bound form. Modulates the activity of potassium channels that are activated in response to CHRM2 signaling. Activity on GNAZ is inhibited by palmitoylation of the G-protein. The polypeptide is Regulator of G-protein signaling 10 (Rgs10) (Mus musculus (Mouse)).